The primary structure comprises 601 residues: Elongation factor 4 (601 aa).

The region spanning 5 to 187 (ENIRNFCIIA…AIVHHLPAPK (183 aa)) is the tr-type G domain. Residues 17–22 (DHGKST) and 134–137 (NKID) each bind GTP.

This sequence belongs to the TRAFAC class translation factor GTPase superfamily. Classic translation factor GTPase family. LepA subfamily.

Its subcellular location is the cell inner membrane. The enzyme catalyses GTP + H2O = GDP + phosphate + H(+). Required for accurate and efficient protein synthesis under certain stress conditions. May act as a fidelity factor of the translation reaction, by catalyzing a one-codon backward translocation of tRNAs on improperly translocated ribosomes. Back-translocation proceeds from a post-translocation (POST) complex to a pre-translocation (PRE) complex, thus giving elongation factor G a second chance to translocate the tRNAs correctly. Binds to ribosomes in a GTP-dependent manner. This chain is Elongation factor 4, found in Desulfovibrio desulfuricans (strain ATCC 27774 / DSM 6949 / MB).